Reading from the N-terminus, the 138-residue chain is Phospholipase A2 homolog crotoxin acid subunit CA (138 aa).

The signal sequence occupies residues 1–37; the sequence is MRALWIVAVLLVGVEGSLVEFETLMMKIAGRSGISYY. Disulfide bonds link C42–C131, C44–C60, C59–C111, C65–C138, C66–C104, C73–C97, C91–C102, and C131–C138. Positions 79–82 are excised as a propeptide; that stretch reads VYTY. Q84 is modified (pyrrolidone carboxylic acid). Positions 119–124 are excised as a propeptide; that stretch reads YDYKYL. Q125 bears the Pyrrolidone carboxylic acid mark.

The protein belongs to the phospholipase A2 family. Group II subfamily. D49 sub-subfamily. As to quaternary structure, heterodimer of one of the acidic (CA1, CA2, CA3 or CA4) and one of the basic (CBa1, CBa2, CBb, CBc or CBd) subunits; non-covalently linked. The acidic subunit is non-toxic, without enzymatic activity and comprises 3 peptides that are cross-linked by 5 disulfide bridges. The basic subunit is toxic, has phospholipase A2 activity and is composed of a single chain. Multiple variants of each subunit give different crotoxin complexes that can be subdivided into 2 classes: (1) those of high toxicity, low PLA2 activity (CBb, CBc and CBd linked with high affinity to any CA) and high stability (K(d)=4.5 nM) and (2) those of moderate toxicity, high PLA2 activity (CBa2 linked with low affinity to any CA) and low stability (K(d)=25 nM). Expressed by the venom gland.

The protein resides in the secreted. Functionally, CAalpha-CAbeta-CAgamma: The acidic subunit of crotoxin (CA) is a heterotrimer of three disulfide-linked chains generated by post-translational maturation of a PLA2-like precursor. CA has no PLA2 activity and is not neurotoxic by itself, but plays several important functions in the crotoxin complex by increasing the lethal potency of the uncomplexed CB subunit. It acts by physically occluding the hydrophobic interfacial binding surface (IBS) of CB. This effect decreases the adsorption of CB to phospholipid membranes, targeting the crotoxin complex to reach the specific presynaptic receptor (R48) at the neuromuscular junction. It also prevents the formation of the reactive CB dimer. Moreover, the CA subunit inhibits the catalytic activity by partially masking the catalytic site of CB and inhibits its anticoagulant activity. Heterodimer CA-CB: Crotoxin is a potent presynaptic neurotoxin that possesses phospholipase A2 (PLA2) activity and exerts a lethal action by blocking neuromuscular transmission. It consists of a non-covalent association of a basic and weakly toxic PLA2 subunit (CBa2, CBb, CBc, or CBd), with a small acidic, non-enzymatic and non-toxic subunit (CA1, CA2, CA3 or CA4). The complex acts by binding to a specific 48-kDa protein (R48/CAPT) receptor located on presynaptic membranes, forming a transient ternary complex CA-CB-R48, followed by dissociation of the CA-CB complex and release of the CA subunit. At equilibrium, only the CB subunits remain associated with the specific crotoxin receptor. In addition to neurotoxicity, crotoxin has been found to exert myotoxicity, nephrotoxicity, and cardiovascular toxicity. Moreover, anti-inflammatory, immunomodulatory, anti-tumor and analgesic effects of crotoxin have also been reported. In terms of biological role, found in the venom as a monomer and stabilized by one disulfide bond (Cys-131 and Cys-138). This peptide induces potent antinociceptive effects in acute and chronic pain models. This effect is mediated by the release of peripheral dynorphin A, an endogenous agonist of kappa-opioid receptors, and this release is dependent on cannabinoid receptor CB2 activation. The chain is Phospholipase A2 homolog crotoxin acid subunit CA from Crotalus durissus terrificus (South American rattlesnake).